A 346-amino-acid polypeptide reads, in one-letter code: Elongation factor 1-alpha (346 aa).

The tr-type G domain maps to 1 to 127 (GTSQADVALL…DNVEPPKRPS (127 aa)). 49 to 52 (NKMD) lines the GTP pocket.

The protein belongs to the TRAFAC class translation factor GTPase superfamily. Classic translation factor GTPase family. EF-Tu/EF-1A subfamily.

It is found in the cytoplasm. In terms of biological role, this protein promotes the GTP-dependent binding of aminoacyl-tRNA to the A-site of ribosomes during protein biosynthesis. The polypeptide is Elongation factor 1-alpha (Eimeria bovis).